We begin with the raw amino-acid sequence, 375 residues long: METKISVLIIEYFAVKRKLISDLINSSPKLQVIATASNSKFATNKLKKHKPEVILMNLEENNIKDILFLEEKNSLNKTIPIVVTSSNQNLINIAASKGADDLILVSKNKKSHEIKKEQIINSLLAYGSISIKNKIACNKDMKTKNYERANFILNHKNDISSLNQLEEHAKEKTLNEKEIKKLKLRKFDIIAIGVSAGGPVALKSILPEIPESFPPIIIVQHMPKGFTEEFAKNLNNLCKISVKETTNNEILKQGYAYISSGGYHTKIKKIDGNYQIKTLDGKHINGHKPSIGVLFQSIAEIAKDKAIAIIMTGMGNDGSREIGDIKKAGGLTIAQDKESSMVFGMPKIAIKENNIDYIVPLSHMVKLLKAILINS.

Residues 6–120 form the Response regulatory domain; the sequence is SVLIIEYFAV…SHEIKKEQII (115 aa). The CheB-type methylesterase domain occupies 183–375; sequence KLRKFDIIAI…KLLKAILINS (193 aa). Catalysis depends on residues Ser195, His221, and Asp317.

It carries out the reaction [protein]-L-glutamate 5-O-methyl ester + H2O = L-glutamyl-[protein] + methanol + H(+). The protein is Probable protein-glutamate methylesterase BB_0415 of Borreliella burgdorferi (strain ATCC 35210 / DSM 4680 / CIP 102532 / B31) (Borrelia burgdorferi).